Reading from the N-terminus, the 756-residue chain is Catalase-peroxidase (756 aa).

A cross-link (tryptophyl-tyrosyl-methioninium (Trp-Tyr) (with M-270)) is located at residues 91–244 (WHSAGTYRTG…LAAVQMGLIY (154 aa)). H92 serves as the catalytic Proton acceptor. The interval 198–230 (AQKKMQQPGDGTLVAEPENHANEESRTASGERN) is disordered. A compositionally biased stretch (basic and acidic residues) spans 214-223 (PENHANEESR). The segment at residues 244–270 (YVNPEGPEGVPDPVASARDIRETFGRM) is a cross-link (tryptophyl-tyrosyl-methioninium (Tyr-Met) (with W-91)). H285 lines the heme b pocket. The tract at residues 371-390 (KNGAGAGKIPDAHDPSKRHA) is disordered.

It belongs to the peroxidase family. Peroxidase/catalase subfamily. As to quaternary structure, homodimer or homotetramer. It depends on heme b as a cofactor. Formation of the three residue Trp-Tyr-Met cross-link is important for the catalase, but not the peroxidase activity of the enzyme.

It carries out the reaction H2O2 + AH2 = A + 2 H2O. The catalysed reaction is 2 H2O2 = O2 + 2 H2O. Functionally, bifunctional enzyme with both catalase and broad-spectrum peroxidase activity. The protein is Catalase-peroxidase of Pseudomonas syringae pv. tomato (strain ATCC BAA-871 / DC3000).